Reading from the N-terminus, the 288-residue chain is Damage-control phosphatase AF_1104 (288 aa).

Positions 7 to 10 (CPSC) match the Subfamily I CxxC motif motif. Positions 160, 161, and 194 each coordinate Mn(2+). Residues 247 to 250 (ANYE) carry the Subfamily I GNFE-like motif motif. The Subfamily I KC motif signature appears at 267–268 (KC).

Belongs to the damage-control phosphatase family. Nucleotides phosphatase I subfamily. It depends on [2Fe-2S] cluster as a cofactor. Mn(2+) is required as a cofactor. Ni(2+) serves as cofactor.

Its function is as follows. Metal-dependent phosphatase with probable damage-control functions. Could hydrolyze oxidatively damaged purine nucleotides or their biosynthetic intermediates. The protein is Damage-control phosphatase AF_1104 of Archaeoglobus fulgidus (strain ATCC 49558 / DSM 4304 / JCM 9628 / NBRC 100126 / VC-16).